Here is a 692-residue protein sequence, read N- to C-terminus: Ribonuclease J (692 aa).

The interval 1-91 is disordered; that stretch reads MTDNNQNNEN…RNYAKEELDN (91 aa). Residues 9 to 25 are compositionally biased toward basic and acidic residues; that stretch reads ENHENSSENSKDHHEAR. Basic residues predominate over residues 57-79; that stretch reads HHKKEHRPNKKPNNHHKPKHASQ. Residues Lys-135 and Lys-141 each carry the N6-acetyllysine modification. 6 residues coordinate Zn(2+): His-209, His-211, Asp-213, His-214, His-278, and Asp-300. An N6-acetyllysine mark is found at Lys-324, Lys-338, and Lys-398. 501-505 serves as a coordination point for substrate; that stretch reads HVSGH. Lys-512 carries the post-translational modification N6-acetyllysine. His-527 provides a ligand contact to Zn(2+). 3 positions are modified to N6-acetyllysine: Lys-548, Lys-635, and Lys-650.

Belongs to the metallo-beta-lactamase superfamily. RNA-metabolizing metallo-beta-lactamase-like family. Bacterial RNase J subfamily. In terms of assembly, homodimer. Homotetramer; dimer of homodimers. Interacts with RNA helicase RhpA, might be a member of a minimal RNA degradosome complex. The cofactor is Zn(2+). Post-translationally, acetylated on nine lysine residues. Some of the residues are acetylated by multiple different mechanisms. RimL is partially responsible for the acetylation of Lys-324, Lys-398 and Lys-650. HPB8_1270 homolog is partially responsible for the acetylation of Lys-324, Lys-398, Lys-512 and Lys-650. Acetyl-phosphate-mediated non-enzymatic acetylation pathway takes part in the acetylation of Lys-135, Lys-324, Lys-398, Lys-512 and Lys-650. Acetylation of the remaining residues Lys-141, Lys-338, Lys-548 and Lys-635 occurs by a yet undetermined mechanism. Acetylation on a number of these residues is important for growth regulation and proper cell morphology.

The protein localises to the cytoplasm. Catalytic activity is regulated by the balance between homodimers and homotetramers, with homotetramers being the active forms of this enzyme. Acetylation allosterically regulates the homooligomerization state and hence the catalytic activity. Functionally, an RNase that has 5'-3' exoribonuclease and endoribonuclease activity. Degrades 5'-monophosphorylated ssRNA and dsRNA, considerably more active on ssRNA. Association with RhpA significantly increases the dsRNase activity. Degrades RNA substrate with hairpin structures at both ends with low activity, but presence of RhpA significantly increases the activity on this substrate. Stimulates ATPase activity of RNA helicase RhpA. Involved in stabilization of mRNA but apparently not rRNA. This chain is Ribonuclease J, found in Helicobacter pylori (strain J99 / ATCC 700824) (Campylobacter pylori J99).